The primary structure comprises 90 residues: UPF0223 protein lwe1035 (90 aa).

This sequence belongs to the UPF0223 family.

The protein is UPF0223 protein lwe1035 of Listeria welshimeri serovar 6b (strain ATCC 35897 / DSM 20650 / CCUG 15529 / CIP 8149 / NCTC 11857 / SLCC 5334 / V8).